The chain runs to 404 residues: MKLPIYLDYSATTPVDPRVAEKMIECLTNEGNFGNPASRSHAFGWKAEEAVENARRQVAELVNADPREIVWTSGATESDNLAIKGVAHFYASKGKHIVTTKIEHKAVLDTTRQLEREGFEVTYIEPGDDGIVTPAMVEAALREDTILVSVMHVNNEIGTINDITAIGELTRARGILFHVDAAQSTGKVEIDLEKIKVDLMSFSAHKTYGPKGVGALYVRRKPRVRLEAQMHGGGHERGMRSGTLATHQLVGMGEAFRIAKQEMAQENERIRALRDRFYKQVEHLEELYVNGSMTARVPHNLNLSFNYVEGESLIMALKDLAVSSGSACTSASLEPSYVLRALGRNDELAHSSIRFTFGRFTTEEEIDYAAQKVCEAVTKLRELSPLWDMFKDGVDISKVEWQAH.

Pyridoxal 5'-phosphate-binding positions include 75 to 76 (AT), asparagine 155, glutamine 183, and 203 to 205 (SAH). At lysine 206 the chain carries N6-(pyridoxal phosphate)lysine. Threonine 243 is a pyridoxal 5'-phosphate binding site. Cysteine 328 serves as the catalytic Cysteine persulfide intermediate. Cysteine 328 is a [2Fe-2S] cluster binding site.

The protein belongs to the class-V pyridoxal-phosphate-dependent aminotransferase family. NifS/IscS subfamily. In terms of assembly, homodimer. Forms a heterotetramer with IscU, interacts with other sulfur acceptors. Requires pyridoxal 5'-phosphate as cofactor.

Its subcellular location is the cytoplasm. It carries out the reaction (sulfur carrier)-H + L-cysteine = (sulfur carrier)-SH + L-alanine. It participates in cofactor biosynthesis; iron-sulfur cluster biosynthesis. Functionally, master enzyme that delivers sulfur to a number of partners involved in Fe-S cluster assembly, tRNA modification or cofactor biosynthesis. Catalyzes the removal of elemental sulfur atoms from cysteine to produce alanine. Functions as a sulfur delivery protein for Fe-S cluster synthesis onto IscU, an Fe-S scaffold assembly protein, as well as other S acceptor proteins. This chain is Cysteine desulfurase IscS, found in Stutzerimonas stutzeri (strain A1501) (Pseudomonas stutzeri).